The chain runs to 260 residues: MICOS complex subunit mic25-a (260 aa).

The segment at 1-92 (MGGSESTGRK…KPTARGVGHQ (92 aa)) is disordered. Glycine 2 is lipidated: N-myristoyl glycine. Basic and acidic residues predominate over residues 28-39 (RLSDEVVNRMKD). The span at 48–64 (STSTASGTTSGPTTFPS) shows a compositional bias: low complexity. Residues 94–187 (AEEDLYRRYE…LNSIEKKNLE (94 aa)) are a coiled coil. The region spanning 213-255 (DPVCMDLQSNILKCYAENKQERLNCSDLAKEYGKCVSAAQKNL) is the CHCH domain. 2 short sequence motifs (cx9C motif) span residues 216-226 (CMDLQSNILKC) and 237-247 (CSDLAKEYGKC). 2 disulfide bridges follow: cysteine 216–cysteine 247 and cysteine 226–cysteine 237.

The protein belongs to the MICOS complex subunit Mic19 family. Metazoan Mic25 subfamily. As to quaternary structure, component of the mitochondrial contact site and cristae organizing system (MICOS) complex (also known as MINOS or MitOS complex).

The protein localises to the mitochondrion inner membrane. Component of the MICOS complex, a large protein complex of the mitochondrial inner membrane that plays crucial roles in the maintenance of crista junctions, inner membrane architecture, and formation of contact sites to the outer membrane. This Xenopus laevis (African clawed frog) protein is MICOS complex subunit mic25-a (chchd6-a).